The chain runs to 183 residues: Inosine triphosphate pyrophosphatase (183 aa).

8-13 (TGNKNK) contributes to the ITP binding site. Glu-36 provides a ligand contact to Mg(2+). ITP contacts are provided by residues Lys-48, 64–65 (DT), Lys-81, 140–143 (FGWD), Lys-161, and 166–167 (HR).

Belongs to the HAM1 NTPase family. As to quaternary structure, homodimer. It depends on Mg(2+) as a cofactor. Mn(2+) is required as a cofactor.

The protein localises to the cytoplasm. It localises to the nucleus. The enzyme catalyses ITP + H2O = IMP + diphosphate + H(+). The catalysed reaction is dITP + H2O = dIMP + diphosphate + H(+). It catalyses the reaction XTP + H2O = XMP + diphosphate + H(+). Its function is as follows. Pyrophosphatase that hydrolyzes non-canonical purine nucleotides such as inosine triphosphate (ITP), deoxyinosine triphosphate (dITP) or xanthosine 5'-triphosphate (XTP) to their respective monophosphate derivatives. The enzyme does not distinguish between the deoxy- and ribose forms. Probably excludes non-canonical purines from RNA and DNA precursor pools, thus preventing their incorporation into RNA and DNA and avoiding chromosomal lesions. The polypeptide is Inosine triphosphate pyrophosphatase (Emericella nidulans (strain FGSC A4 / ATCC 38163 / CBS 112.46 / NRRL 194 / M139) (Aspergillus nidulans)).